A 536-amino-acid chain; its full sequence is Proto-oncogene tyrosine-protein kinase Src (536 aa).

The interval 1 to 53 (MGSNKSKPKDASQRRRSLEPAENVHGAGGGAFPASQTPSKPASADGHRGPSAA) is disordered. Gly-2 is lipidated: N-myristoyl glycine. The span at 7–19 (KPKDASQRRRSLE) shows a compositional bias: basic and acidic residues. At Ser-17 the chain carries Phosphoserine. Residue Ser-75 is modified to Phosphoserine; by CDK5. An SH3 domain is found at 84 to 145 (GGVTTFVALY…PSNYVAPSDS (62 aa)). The 98-residue stretch at 151–248 (WYFGKITRRE…GLCHRLTTVC (98 aa)) folds into the SH2 domain. Residue Tyr-187 is modified to Phosphotyrosine. The Protein kinase domain maps to 270-523 (LRLEVKLGQG…YLQAFLEDYF (254 aa)). ATP contacts are provided by residues 276–284 (LGQGCFGEV) and Lys-298. Asp-389 (proton acceptor) is an active-site residue. A Phosphotyrosine; by autocatalysis modification is found at Tyr-419. Tyr-419 carries the phosphotyrosine; by FAK2 modification. At Tyr-530 the chain carries Phosphotyrosine; by CSK.

It belongs to the protein kinase superfamily. Tyr protein kinase family. SRC subfamily. As to quaternary structure, part of a complex comprised of PTPRA, BCAR1, BCAR3 (via SH2 domain) and SRC; the formation of the complex is dependent on integrin mediated-tyrosine phosphorylation of PTPRA. Interacts with DDEF1/ASAP1; via the SH3 domain. Interacts with CCPG1. Identified in a complex containing FGFR4, NCAM1, CDH2, PLCG1, FRS2, SRC, SHC1, GAP43 and CTTN. Interacts with ERBB2, STAT1 and PNN. Interacts with DDR1, DDR2 and DAB2. Interacts with CDCP1, TGFB1I1 and TOM1L2. Interacts with the cytoplasmic domain of MUC1, phosphorylates it and increases binding of MUC1 with beta-catenin. Interacts with RALGPS1; via the SH3 domain. Interacts with CAV2 (tyrosine phosphorylated form). Interacts (via the SH3 domain and the protein kinase domain) with ARRB1; the interaction is independent of the phosphorylation state of SRC C-terminus. Interacts with ARRB1 and ARRB2. Interacts with SRCIN1. Interacts with NDFIP2 and more weakly with NDFIP1. Interacts with PIK3CA and/or PIK3C2B, PTK2/FAK1 and ESR1 (dimethylated on arginine). Interacts with FASLG. Interacts (via SH2 domain) with the 'Tyr-402' phosphorylated form of PTK2B/PYK2. Interacts (via SH2 domain) with FLT3 (tyrosine phosphorylated). Interacts with PDGFRA (tyrosine phosphorylated). Interacts with CSF1R. Interacts (via SH2 and SH3 domain) with TNK2. Interacts (via protein kinase domain) with the tyrosine phosphorylated form of RUNX3 (via runt domain). Interacts with TRAF3 (via RING-type zinc finger domain). Interacts with RIGI, MAVS and TBK1. Interacts (via SH2 domain) with RACK1; the interaction is enhanced by tyrosine phosphorylation of RACK1 and inhibits SRC activity. Interacts with EPHB1; activates the MAPK/ERK cascade to regulate cell migration. Interacts with FCAMR. Interacts (via SH2 domain) with the 'Tyr-9' phosphorylated form of PDPK1. Interacts with AMOTL2; this interaction regulates the translocation of phosphorylated SRC to peripheral cell-matrix adhesion sites. Interacts with TRAP1. Interacts with CBLC; the interaction is enhanced when SRC is phosphorylated at Tyr-419. Interacts with ARHGEF5. Interacts (via cytoplasmic domain) with CEACAM1 (via SH2 domain); this interaction is regulated by trans-homophilic cell adhesion. Interacts with MPP2. Interacts with PRR7. Interacts (via kinase domain and to a lesser extent the SH2 domain) directly with PDLIM4; this interaction results in PTPN13-mediated dephosphorylation of this protein leading to its inactivation. Interacts with P85 (PIK3R1 or PIK3R2). Interacts with HNRNPA2B1. Interacts with IL6ST/gp130. Interacts (via SH3 domain) with PELP1 in the presence of 17-beta-estradiol. Interacts with AMBRA1. In terms of assembly, (Microbial infection) Interacts with HEV ORF3 protein; via the SH3 domain. (Microbial infection) Interacts (via SH2 domain) with HCV non-structural protein 5A (via N-terminus). In terms of processing, myristoylated at Gly-2, and this is essential for targeting to membranes. Post-translationally, dephosphorylated at Tyr-530 by PTPRJ. Phosphorylated on Tyr-530 by c-Src kinase (CSK). The phosphorylated form is termed pp60c-src. Dephosphorylated by PTPRJ at Tyr-419. Normally maintained in an inactive conformation with the SH2 domain engaged with Tyr-530, the SH3 domain engaged with the SH2-kinase linker, and Tyr-419 dephosphorylated. Dephosphorylation of Tyr-530 as a result of protein tyrosine phosphatase (PTP) action disrupts the intramolecular interaction between the SH2 domain and Tyr-530, Tyr-419 can then become autophosphorylated, resulting in SRC activation. Phosphorylation of Tyr-530 by CSK allows this interaction to reform, resulting in SRC inactivation. CDK5-mediated phosphorylation at Ser-75 targets SRC to ubiquitin-dependent degradation and thus leads to cytoskeletal reorganization. Phosphorylated by PTK2/FAK1; this enhances kinase activity. Phosphorylated by PTK2B/PYK2; this enhances kinase activity. Upon activation of IL6ST by IL6, Tyr-419 is phosphorylated and Tyr-530 dephosphorylated. Displays reduced levels of autophosphorylation at Tyr-419 compared to isoforms 2 and 3. In terms of processing, displays enhanced levels of autophosphorylation at Tyr-419 compared to isoform 1. Post-translationally, displays enhanced levels of autophosphorylation at Tyr-419 compared to isoform 1. Shows reduced phosphorylation at Tyr-527 compared to isoforms 1 and 2. S-nitrosylation is important for activation of its kinase activity. In terms of processing, ubiquitinated in response to CDK5-mediated phosphorylation. Ubiquitination mediated by CBLC requires SRC autophosphorylation at Tyr-419 and may lead to lysosomal degradation. As to expression, expressed ubiquitously. Expressed in the skin (at protein level). Platelets, neurons and osteoclasts express 5-fold to 200-fold higher levels than most other tissues. In terms of tissue distribution, expressed in spleen and liver. Expressed in brain.

It localises to the cell membrane. The protein localises to the mitochondrion inner membrane. It is found in the nucleus. Its subcellular location is the cytoplasm. The protein resides in the cytoskeleton. It localises to the perinuclear region. The protein localises to the cell junction. It is found in the focal adhesion. The catalysed reaction is L-tyrosyl-[protein] + ATP = O-phospho-L-tyrosyl-[protein] + ADP + H(+). Its activity is regulated as follows. Phosphorylation by CSK at Tyr-530 inhibits kinase activity. Inhibitory phosphorylation at Tyr-530 is enhanced by heme. Further phosphorylation by CDK1 partially reactivates CSK-inactivated SRC and facilitates complete reactivation by protein tyrosine phosphatase PTPRC. Integrin engagement stimulates kinase activity. Phosphorylation by PTK2/FAK1 enhances kinase activity. Butein and pseudosubstrate-based peptide inhibitors like CIYKYYF act as inhibitors. Phosphorylation at Tyr-419 increases kinase activity. Functionally, non-receptor protein tyrosine kinase which is activated following engagement of many different classes of cellular receptors including immune response receptors, integrins and other adhesion receptors, receptor protein tyrosine kinases, G protein-coupled receptors as well as cytokine receptors. Participates in signaling pathways that control a diverse spectrum of biological activities including gene transcription, immune response, cell adhesion, cell cycle progression, apoptosis, migration, and transformation. Due to functional redundancy between members of the SRC kinase family, identification of the specific role of each SRC kinase is very difficult. SRC appears to be one of the primary kinases activated following engagement of receptors and plays a role in the activation of other protein tyrosine kinase (PTK) families. Receptor clustering or dimerization leads to recruitment of SRC to the receptor complexes where it phosphorylates the tyrosine residues within the receptor cytoplasmic domains. Plays an important role in the regulation of cytoskeletal organization through phosphorylation of specific substrates such as AFAP1. Phosphorylation of AFAP1 allows the SRC SH2 domain to bind AFAP1 and to localize to actin filaments. Cytoskeletal reorganization is also controlled through the phosphorylation of cortactin (CTTN). When cells adhere via focal adhesions to the extracellular matrix, signals are transmitted by integrins into the cell resulting in tyrosine phosphorylation of a number of focal adhesion proteins, including PTK2/FAK1 and paxillin (PXN). In addition to phosphorylating focal adhesion proteins, SRC is also active at the sites of cell-cell contact adherens junctions and phosphorylates substrates such as beta-catenin (CTNNB1), delta-catenin (CTNND1), and plakoglobin (JUP). Another type of cell-cell junction, the gap junction, is also a target for SRC, which phosphorylates connexin-43 (GJA1). SRC is implicated in regulation of pre-mRNA-processing and phosphorylates RNA-binding proteins such as KHDRBS1. Phosphorylates PKP3 at 'Tyr-195' in response to reactive oxygen species, which may cause the release of PKP3 from desmosome cell junctions into the cytoplasm. Also plays a role in PDGF-mediated tyrosine phosphorylation of both STAT1 and STAT3, leading to increased DNA binding activity of these transcription factors. Involved in the RAS pathway through phosphorylation of RASA1 and RASGRF1. Plays a role in EGF-mediated calcium-activated chloride channel activation. Required for epidermal growth factor receptor (EGFR) internalization through phosphorylation of clathrin heavy chain (CLTC and CLTCL1) at 'Tyr-1477'. Involved in beta-arrestin (ARRB1 and ARRB2) desensitization through phosphorylation and activation of GRK2, leading to beta-arrestin phosphorylation and internalization. Has a critical role in the stimulation of the CDK20/MAPK3 mitogen-activated protein kinase cascade by epidermal growth factor. Might be involved not only in mediating the transduction of mitogenic signals at the level of the plasma membrane but also in controlling progression through the cell cycle via interaction with regulatory proteins in the nucleus. Plays an important role in osteoclastic bone resorption in conjunction with PTK2B/PYK2. Both the formation of a SRC-PTK2B/PYK2 complex and SRC kinase activity are necessary for this function. Recruited to activated integrins by PTK2B/PYK2, thereby phosphorylating CBL, which in turn induces the activation and recruitment of phosphatidylinositol 3-kinase to the cell membrane in a signaling pathway that is critical for osteoclast function. Promotes energy production in osteoclasts by activating mitochondrial cytochrome C oxidase. Phosphorylates DDR2 on tyrosine residues, thereby promoting its subsequent autophosphorylation. Phosphorylates RUNX3 and COX2 on tyrosine residues, TNK2 on 'Tyr-284' and CBL on 'Tyr-731'. Enhances RIGI-elicited antiviral signaling. Phosphorylates PDPK1 at 'Tyr-9', 'Tyr-373' and 'Tyr-376'. Phosphorylates BCAR1 at 'Tyr-128'. Phosphorylates CBLC at multiple tyrosine residues, phosphorylation at 'Tyr-341' activates CBLC E3 activity. Phosphorylates synaptic vesicle protein synaptophysin (SYP). Involved in anchorage-independent cell growth. Required for podosome formation. Mediates IL6 signaling by activating YAP1-NOTCH pathway to induce inflammation-induced epithelial regeneration. Phosphorylates OTUB1, promoting deubiquitination of RPTOR. Phosphorylates caspase CASP8 at 'Tyr-380' which negatively regulates CASP8 processing and activation, down-regulating CASP8 proapoptotic function. Non-receptor protein tyrosine kinase which phosphorylates synaptophysin with high affinity. Its function is as follows. Non-receptor protein tyrosine kinase which shows higher basal kinase activity than isoform 1, possibly due to weakened intramolecular interactions which enhance autophosphorylation of Tyr-419 and subsequent activation. The SH3 domain shows reduced affinity with the linker sequence between the SH2 and kinase domains which may account for the increased basal activity. Displays altered substrate specificity compared to isoform 1, showing weak affinity for synaptophysin and for peptide substrates containing class I or class II SH3 domain-binding motifs. Plays a role in L1CAM-mediated neurite elongation, possibly by acting downstream of L1CAM to drive cytoskeletal rearrangements involved in neurite outgrowth. In terms of biological role, non-receptor protein tyrosine kinase which shows higher basal kinase activity than isoform 1, possibly due to weakened intramolecular interactions which enhance autophosphorylation of Tyr-419 and subsequent activation. The SH3 domain shows reduced affinity with the linker sequence between the SH2 and kinase domains which may account for the increased basal activity. Displays altered substrate specificity compared to isoform 1, showing weak affinity for synaptophysin and for peptide substrates containing class I or class II SH3 domain-binding motifs. Plays a role in neurite elongation. This Homo sapiens (Human) protein is Proto-oncogene tyrosine-protein kinase Src.